We begin with the raw amino-acid sequence, 516 residues long: GMP synthase [glutamine-hydrolyzing] (516 aa).

In terms of domain architecture, Glutamine amidotransferase type-1 spans 8 to 198 (KILILDFGSQ…VVNICGCDTL (191 aa)). C84 serves as the catalytic Nucleophile. Catalysis depends on residues H172 and E174. A GMPS ATP-PPase domain is found at 199 to 391 (WNIENIIEND…LGLPYNMLYR (193 aa)). 226–232 (SGGVDSS) contacts ATP.

In terms of assembly, homodimer.

It catalyses the reaction XMP + L-glutamine + ATP + H2O = GMP + L-glutamate + AMP + diphosphate + 2 H(+). Its pathway is purine metabolism; GMP biosynthesis; GMP from XMP (L-Gln route): step 1/1. Its function is as follows. Catalyzes the synthesis of GMP from XMP. This Francisella tularensis subsp. tularensis (strain WY96-3418) protein is GMP synthase [glutamine-hydrolyzing].